The chain runs to 122 residues: Ribosome-binding factor A (122 aa).

It belongs to the RbfA family. As to quaternary structure, monomer. Binds 30S ribosomal subunits, but not 50S ribosomal subunits or 70S ribosomes.

It localises to the cytoplasm. Its function is as follows. One of several proteins that assist in the late maturation steps of the functional core of the 30S ribosomal subunit. Associates with free 30S ribosomal subunits (but not with 30S subunits that are part of 70S ribosomes or polysomes). Required for efficient processing of 16S rRNA. May interact with the 5'-terminal helix region of 16S rRNA. The chain is Ribosome-binding factor A from Geotalea uraniireducens (strain Rf4) (Geobacter uraniireducens).